Reading from the N-terminus, the 715-residue chain is Fatty acid oxidation complex subunit alpha (715 aa).

The tract at residues 1–190 is enoyl-CoA hydratase; the sequence is MTTTSAFMLN…KAGLVDDVVP (190 aa). Residues 306–715 form a 3-hydroxyacyl-CoA dehydrogenase region; that stretch reads GPLNSVGILG…WTNGETDQGN (410 aa).

This sequence in the N-terminal section; belongs to the enoyl-CoA hydratase/isomerase family. The protein in the central section; belongs to the 3-hydroxyacyl-CoA dehydrogenase family. As to quaternary structure, heterotetramer of two alpha chains (FadJ) and two beta chains (FadI).

Its subcellular location is the cytoplasm. The catalysed reaction is a (3S)-3-hydroxyacyl-CoA = a (2E)-enoyl-CoA + H2O. It catalyses the reaction a 4-saturated-(3S)-3-hydroxyacyl-CoA = a (3E)-enoyl-CoA + H2O. The enzyme catalyses a (3S)-3-hydroxyacyl-CoA + NAD(+) = a 3-oxoacyl-CoA + NADH + H(+). It carries out the reaction (3S)-3-hydroxybutanoyl-CoA = (3R)-3-hydroxybutanoyl-CoA. The protein operates within lipid metabolism; fatty acid beta-oxidation. Functionally, catalyzes the formation of a hydroxyacyl-CoA by addition of water on enoyl-CoA. Also exhibits 3-hydroxyacyl-CoA epimerase and 3-hydroxyacyl-CoA dehydrogenase activities. This Salmonella agona (strain SL483) protein is Fatty acid oxidation complex subunit alpha.